The following is a 319-amino-acid chain: Thioredoxin reductase (319 aa).

FAD is bound at residue 36-48 (EGFMAGGVAAGGQ). C144 and C147 form a disulfide bridge. 289-298 (DVQDKVYRQA) contributes to the FAD binding site.

Belongs to the class-II pyridine nucleotide-disulfide oxidoreductase family. Homodimer. FAD serves as cofactor.

The catalysed reaction is [thioredoxin]-dithiol + NADP(+) = [thioredoxin]-disulfide + NADPH + H(+). This is Thioredoxin reductase (trrA) from Dictyostelium discoideum (Social amoeba).